The sequence spans 485 residues: MELFELTLHELHDKLAKREVSSVEATRALLARIEATDSRVNAYITVTPDEALAAAEAADRRIAAGGLTPLTGVPVALKDIFVTRGIRTTCGSKILGNFIPPYDGTVVAKLREAGAVIVGKLNQDEFAMGSSGESSAFGATKNPWNLACIPGGSSSGSAAAIAARSATATLGTDTGGSIRQPASHCGCVGLRPTYGRVSRYGVIAYASSLDQVGPVTRDVTDCALMLGAVAGHDPLDSTSIDLPVPDYAAALTGQVKGLRLGLPKEYYLEGLDPDVKRALDAAIETYRGLGAEFVEVSLPHTDYAVATYYLIATAEASSNLARYDGVRFGHRAAGAANLIDMFRRSRAEGFGAEVKRRIMIGTYALSSGYYDAYYLKAQKVRTLIMQDFMKAFEQVDALLTPVAPTPAFKIGEKVDDPLQMYLSDIFTIPVNLAGTCAISVPAGMSAAGLPIGLQLIGRPFGEETILRAAHAFEQATEWHRHTAQL.

Catalysis depends on charge relay system residues Lys-78 and Ser-153. The active-site Acyl-ester intermediate is the Ser-177.

Belongs to the amidase family. GatA subfamily. As to quaternary structure, heterotrimer of A, B and C subunits.

The enzyme catalyses L-glutamyl-tRNA(Gln) + L-glutamine + ATP + H2O = L-glutaminyl-tRNA(Gln) + L-glutamate + ADP + phosphate + H(+). Functionally, allows the formation of correctly charged Gln-tRNA(Gln) through the transamidation of misacylated Glu-tRNA(Gln) in organisms which lack glutaminyl-tRNA synthetase. The reaction takes place in the presence of glutamine and ATP through an activated gamma-phospho-Glu-tRNA(Gln). The sequence is that of Glutamyl-tRNA(Gln) amidotransferase subunit A from Geobacter sulfurreducens (strain ATCC 51573 / DSM 12127 / PCA).